The following is a 94-amino-acid chain: Co-chaperonin GroES (94 aa).

This sequence belongs to the GroES chaperonin family. As to quaternary structure, heptamer of 7 subunits arranged in a ring. Interacts with the chaperonin GroEL.

It localises to the cytoplasm. Its function is as follows. Together with the chaperonin GroEL, plays an essential role in assisting protein folding. The GroEL-GroES system forms a nano-cage that allows encapsulation of the non-native substrate proteins and provides a physical environment optimized to promote and accelerate protein folding. GroES binds to the apical surface of the GroEL ring, thereby capping the opening of the GroEL channel. The chain is Co-chaperonin GroES from Streptococcus oralis.